The sequence spans 463 residues: Protein MRG3-like (463 aa).

Residues 54–74 (WVLSTGIVSFIAFNIWWVYWP) form a helical membrane-spanning segment. TPR repeat units follow at residues 84 to 118 (KILR…CKAE), 128 to 161 (TGIE…FYNE), 358 to 389 (ELIR…ANEN), and 409 to 442 (SLAH…SEMI).

This sequence belongs to the MGR3 family.

The protein resides in the membrane. The protein is Protein MRG3-like of Saccharomyces cerevisiae (strain ATCC 204508 / S288c) (Baker's yeast).